Reading from the N-terminus, the 364-residue chain is tRNA N6-adenosine threonylcarbamoyltransferase (364 aa).

Residues H118 and H122 each coordinate Fe cation. Residues L140–G144, D173, G186, and N288 each bind substrate. Fe cation is bound at residue D316.

The protein belongs to the KAE1 / TsaD family. Requires Fe(2+) as cofactor.

The protein localises to the cytoplasm. It catalyses the reaction L-threonylcarbamoyladenylate + adenosine(37) in tRNA = N(6)-L-threonylcarbamoyladenosine(37) in tRNA + AMP + H(+). Its function is as follows. Required for the formation of a threonylcarbamoyl group on adenosine at position 37 (t(6)A37) in tRNAs that read codons beginning with adenine. Is involved in the transfer of the threonylcarbamoyl moiety of threonylcarbamoyl-AMP (TC-AMP) to the N6 group of A37, together with TsaE and TsaB. TsaD likely plays a direct catalytic role in this reaction. This Cereibacter sphaeroides (strain KD131 / KCTC 12085) (Rhodobacter sphaeroides) protein is tRNA N6-adenosine threonylcarbamoyltransferase.